The sequence spans 171 residues: Der GTPase-activating protein YihI (171 aa).

Disordered regions lie at residues 1-99 (MKKP…QAEL) and 145-171 (LSYD…RGGN). Basic and acidic residues predominate over residues 20–30 (TREELNQEARD). Positions 31–40 (RKRLKKHRGH) are enriched in basic residues. The segment covering 147–160 (YDDDEEDDEEDEKQ) has biased composition (acidic residues).

The protein belongs to the YihI family. Interacts with Der.

In terms of biological role, a GTPase-activating protein (GAP) that modifies Der/EngA GTPase function. May play a role in ribosome biogenesis. The chain is Der GTPase-activating protein YihI from Salmonella agona (strain SL483).